We begin with the raw amino-acid sequence, 157 residues long: MLPELRVLYFEDLEVGLTEILKKEISSSDVVGFAEITGDRNPIHLSEHFAARTPFGTRIAHGLYTAGLISAVLGTRLPGPGAVYISQTLNFRAPVRIGDIVEVKVEVAELIPERRRARLACTCSVGDEVVLDGEALVKVPKKEEADPLAMRMGGGRA.

One can recognise a MaoC-like domain in the interval 22 to 120 (KKEISSSDVV…IPERRRARLA (99 aa)).

The catalysed reaction is (3R)-3-hydroxybutanoyl-CoA = (2E)-butenoyl-CoA + H2O. In terms of biological role, involved in the regeneration of glyoxylate from a molecule of acetyl-CoA. The polypeptide is 3-hydroxybutyryl-CoA dehydratase (Methylorubrum extorquens (strain ATCC 14718 / DSM 1338 / JCM 2805 / NCIMB 9133 / AM1) (Methylobacterium extorquens)).